Reading from the N-terminus, the 220-residue chain is Iron-sulfur cluster repair protein YtfE (220 aa).

It belongs to the RIC family. YtfE subfamily. In terms of assembly, homodimer.

It is found in the cytoplasm. In terms of biological role, di-iron-containing protein involved in the repair of iron-sulfur clusters damaged by oxidative and nitrosative stress conditions. The protein is Iron-sulfur cluster repair protein YtfE of Escherichia coli O8 (strain IAI1).